The following is a 339-amino-acid chain: Annexin A2 (339 aa).

Ser2 is subject to N-acetylserine. An S100A10-binding site region spans residues 2–24 (STVHEILCKLSLEGDHSTPASAY). Tyr24 is modified (phosphotyrosine; by SRC). At Ser26 the chain carries Phosphoserine; by PKC. 2 Annexin repeats span residues 33–104 (FDAE…GLLK) and 105–176 (TPAQ…ALAK). Position 49 is an N6-acetyllysine; alternate (Lys49). A Glycyl lysine isopeptide (Lys-Gly) (interchain with G-Cter in SUMO1); alternate cross-link involves residue Lys49. A Glycyl lysine isopeptide (Lys-Gly) (interchain with G-Cter in SUMO2); alternate cross-link involves residue Lys49. Lys152 is subject to N6-acetyllysine. Ser184 is subject to Phosphoserine. 2 Annexin repeats span residues 189–261 (ELID…NLVQ) and 265–336 (NKPL…YLCG). The residue at position 199 (Tyr199) is a Phosphotyrosine. Lys227 carries the N6-acetyllysine modification.

It belongs to the annexin family. In terms of assembly, heterotetramer containing 2 light chains of S100A10/p11 and 2 heavy chains of ANXA2/p36. Interacts with ATP1B1. Interacts with DYSF. Interacts with COCH. Interacts (via repeat Annexin 1) with PCSK9 (via the C-terminal domain); the interaction inhibits the degradation of LDLR. Interacts with CEACAM1 (via the cytoplasmic domain); this interaction is regulated by phosphorylation of CEACAM1. Interacts with APPL2 and APPL1; targets APPL2 to endosomes and acting in parallel to RAB5A. Interacts with S100A4. May interact with UBAP2. Interacts with PLEKHG4B; this interaction is required for PLEKHG4B localization to cell-cell adhesions. (Microbial infection) Interacts with classical swine fever virus envelope glycoprotein E2. In terms of processing, ISGylated.

Its subcellular location is the secreted. The protein localises to the extracellular space. The protein resides in the extracellular matrix. It is found in the basement membrane. It localises to the melanosome. Calcium-regulated membrane-binding protein whose affinity for calcium is greatly enhanced by anionic phospholipids. It binds two calcium ions with high affinity. May be involved in heat-stress response. Inhibits PCSK9-enhanced LDLR degradation, probably reduces PCSK9 protein levels via a translational mechanism but also competes with LDLR for binding with PCSK9. Binds to endosomes damaged by phagocytosis of particulate wear debris and participates in endosomal membrane stabilization, thereby limiting NLRP3 inflammasome activation. Required for endothelial cell surface plasmin generation and may support fibrinolytic surveillance and neoangiogenesis. Its function is as follows. (Microbial infection) May serve as a receptor for classical swine fever virus (CSFV). Promotes CSFV infection. The chain is Annexin A2 (ANXA2) from Sus scrofa (Pig).